The primary structure comprises 116 residues: Histone H2B (116 aa).

Residues 1-11 (TSGKAAKKAGK) show a composition bias toward basic residues. The tract at residues 1–25 (TSGKAAKKAGKAQKSITKGDKKKRK) is disordered. 3 positions are modified to N6-acetyllysine: Lys4, Lys11, and Lys14. A glycan (O-linked (GlcNAc) serine) is linked at Ser103. A Glycyl lysine isopeptide (Lys-Gly) (interchain with G-Cter in ubiquitin) cross-link involves residue Lys111.

As to quaternary structure, the nucleosome is a histone octamer containing two molecules each of H2A, H2B, H3 and H4 assembled in one H3-H4 heterotetramer and two H2A-H2B heterodimers. The octamer wraps approximately 147 bp of DNA. Monoubiquitination gives a specific tag for epigenetic transcriptional activation and is also prerequisite for histone H3 'Lys-4' and 'Lys-79' methylation. In terms of processing, glcNAcylation at Ser-103 promotes monoubiquitination of Lys-111. It fluctuates in response to extracellular glucose, and associates with transcribed genes.

The protein localises to the nucleus. It localises to the chromosome. In terms of biological role, core component of nucleosome. Nucleosomes wrap and compact DNA into chromatin, limiting DNA accessibility to the cellular machineries which require DNA as a template. Histones thereby play a central role in transcription regulation, DNA repair, DNA replication and chromosomal stability. DNA accessibility is regulated via a complex set of post-translational modifications of histones, also called histone code, and nucleosome remodeling. A mixture of histones H2B and H4 has antimicrobial activity against the Gram-positive bacterium M.luteus. The protein is Histone H2B of Penaeus vannamei (Whiteleg shrimp).